Consider the following 352-residue polypeptide: tRNA pseudouridine synthase D (352 aa).

The active-site Nucleophile is the Asp78. A TRUD domain is found at 153–299 (GVPNYYGEQR…LDQDRRPLLL (147 aa)).

The protein belongs to the pseudouridine synthase TruD family.

The enzyme catalyses uridine(13) in tRNA = pseudouridine(13) in tRNA. In terms of biological role, responsible for synthesis of pseudouridine from uracil-13 in transfer RNAs. The chain is tRNA pseudouridine synthase D from Aeromonas salmonicida (strain A449).